Reading from the N-terminus, the 83-residue chain is Normal mucosa of esophagus-specific gene 1 protein (83 aa).

This sequence belongs to the complex I NDUFA4 subunit family. Strongly expressed in vertebrae, brain, intestine and stomach.

The protein localises to the nucleus. This Mus musculus (Mouse) protein is Normal mucosa of esophagus-specific gene 1 protein (Nmes1).